Reading from the N-terminus, the 501-residue chain is Ribose import ATP-binding protein RbsA (501 aa).

2 consecutive ABC transporter domains span residues 6–242 (LQLS…VGRK) and 253–495 (KHGE…VGKK). An ATP-binding site is contributed by 38–45 (GENGAGKS).

Belongs to the ABC transporter superfamily. Ribose importer (TC 3.A.1.2.1) family. As to quaternary structure, the complex is composed of an ATP-binding protein (RbsA), two transmembrane proteins (RbsC) and a solute-binding protein (RbsB).

It localises to the cell inner membrane. The enzyme catalyses D-ribose(out) + ATP + H2O = D-ribose(in) + ADP + phosphate + H(+). Its function is as follows. Part of the ABC transporter complex RbsABC involved in ribose import. Responsible for energy coupling to the transport system. The polypeptide is Ribose import ATP-binding protein RbsA (Vibrio parahaemolyticus serotype O3:K6 (strain RIMD 2210633)).